The following is a 649-amino-acid chain: MSEAHIYPVKQNIKAHTHADNDTYLAMYQQSIKDPEGFWSEHGKIVDWIKPFTKVKHTSFDPGHIDIRWFEDGTLNVSANCIDRHLATRGDQVAIIWEGDDPTQDKTLTYKQLHQEVCRFANALKEQGVRKGDVVCIYMPMVPEAAVAMLACTRIGAVHTIVFGGFSPEALAGRIIDSNAKLVITADEGVRGGRAVPLKKNVDEALCNPEVKNISKVMVLKRTGGNVAWHEHRDIWWHEATAKASDNCPPEEMKAEDPLFILYTSGSTGKPKGVLHTTGGYLVYATMTFKYVFDYQPNEVFWCTADVGWITGHSYLVYGPLANGAKTILFEGVPNYPTTARMSEVVDKHKVNILYTAPTAIRALMAKGDEAIKGTSRDSLRIMGSVGEPINPEAWEWYYRTIGNEKSPIVDTWWQTETGGILITPLPGATALKPGSATRPFFGVQPALVDNMGEIVEGATEGNLVLLDSWPGQMRTVYGDHDRFEQTYFSTFKGMYFTGDGARRDEDGYYWITGRVDDVLNVSGHRMGTAEIESALVAFNKIAEAAVVGVPHDIKGQAIYAYITLNDGVYPSAELHKEVKDWVRKEIGAIATPDVLHWTDALPKTRSGKIMRRILRKIATGDTSNLGDTSTLADPSVVDRLIAEKAQLK.

Residues 191–194, Thr-311, and Asn-335 contribute to the CoA site; that span reads RGGR. ATP contacts are provided by residues 387-389, 411-416, Asp-500, and Arg-515; these read GEP and DTWWQT. Ser-523 lines the CoA pocket. Arg-526 provides a ligand contact to ATP. Residues Val-537, Phe-539, and Ile-542 each coordinate Mg(2+). CoA is bound at residue Arg-584. The residue at position 609 (Lys-609) is an N6-acetyllysine.

This sequence belongs to the ATP-dependent AMP-binding enzyme family. Mg(2+) serves as cofactor. Acetylated. Deacetylation by the SIR2-homolog deacetylase activates the enzyme.

The enzyme catalyses acetate + ATP + CoA = acetyl-CoA + AMP + diphosphate. Catalyzes the conversion of acetate into acetyl-CoA (AcCoA), an essential intermediate at the junction of anabolic and catabolic pathways. AcsA undergoes a two-step reaction. In the first half reaction, AcsA combines acetate with ATP to form acetyl-adenylate (AcAMP) intermediate. In the second half reaction, it can then transfer the acetyl group from AcAMP to the sulfhydryl group of CoA, forming the product AcCoA. The polypeptide is Acetyl-coenzyme A synthetase (Vibrio cholerae serotype O1 (strain ATCC 39315 / El Tor Inaba N16961)).